The primary structure comprises 359 residues: MTSASKGILRPFLIVCIILACSMVCLFIYIKPTNSWIFSPMESASSVLKMKNFFSTKTGDFNETTILIWVWPFGQTFDLTSCQAMFNIQGCHLTTDRSLYNKSHAVLIHHRDISWDLTNLPQQARPPFQKWIWMNLESPTHTPQKSGIEHLFNLTLTYRRDSDIQVPYGFLTVSTNPFVFEVPNKEKLVCWVVSNWNPEHARVKYYNELSKSIEIHTYGQAFGEYVTDKNLIPTISTCKFYLSFENSIHKDYITEKLYNAFLAGSVPVVLGPSRENYENYIPADSFIHVEDYNSPSELAKYLKEVDKNNKLYLSYFNWRKDFTVNLPRFWESHACLACDHVKRHQEYKSVGNLEKWFWN.

Residues 1–11 lie on the Cytoplasmic side of the membrane; it reads MTSASKGILRP. A helical; Signal-anchor for type II membrane protein membrane pass occupies residues 12–32; it reads FLIVCIILACSMVCLFIYIKP. The Lumenal segment spans residues 33 to 359; sequence TNSWIFSPME…VGNLEKWFWN (327 aa). N-linked (GlcNAc...) asparagine glycosylation is present at Asn62. Positions 63–168 are acceptor-binding; sequence ETTILIWVWP…RRDSDIQVPY (106 aa). Gln75 is a binding site for a beta-D-galactosyl-(1-&gt;4)-N-acetyl-beta-D-glucosaminyl derivative. Cystine bridges form between Cys82/Cys335, Cys91/Cys338, and Cys190/Cys238. Asn101 carries an N-linked (GlcNAc...) asparagine glycan. Glu137 is a binding site for a beta-D-galactosyl-(1-&gt;4)-N-acetyl-beta-D-glucosaminyl derivative. Glu137 functions as the Nucleophile in the catalytic mechanism. Residue Glu137 participates in GDP-beta-L-fucose binding. Asn153 carries N-linked (GlcNAc...) asparagine glycosylation. Tyr168, Val192, Ser194, Asn195, Arg202, Val226, Tyr241, Asn246, Tyr252, Glu255, and Lys256 together coordinate GDP-beta-L-fucose. The interval 169 to 326 is donor-binding; that stretch reads GFLTVSTNPF…NWRKDFTVNL (158 aa). The tract at residues 327 to 359 is acceptor-binding; it reads PRFWESHACLACDHVKRHQEYKSVGNLEKWFWN.

It belongs to the glycosyltransferase 10 family. As to quaternary structure, homodimer. In terms of processing, N-glycosylated with complex-type N-glycans.

It localises to the golgi apparatus. The protein localises to the trans-Golgi network membrane. It is found in the golgi apparatus membrane. It catalyses the reaction a beta-D-galactosyl-(1-&gt;4)-N-acetyl-beta-D-glucosaminyl derivative + GDP-beta-L-fucose = a beta-D-galactosyl-(1-&gt;4)-[alpha-L-fucosyl-(1-&gt;3)]-N-acetyl-beta-D-glucosaminyl derivative + GDP + H(+). It carries out the reaction an alpha-Neu5Ac-(2-&gt;3)-beta-D-Gal-(1-&gt;4)-beta-D-GlcNAc-(1-&gt;3)-beta-D-Gal-(1-&gt;4)-beta-D-GlcNAc derivative + GDP-beta-L-fucose = an alpha-Neu5Ac-(2-&gt;3)-beta-D-Gal-(1-&gt;4)-beta-D-GlcNAc-(1-&gt;3)-beta-D-Gal-(1-&gt;4)-[alpha-L-Fuc-(1-&gt;3)]-beta-D-GlcNAc derivative + GDP + H(+). The catalysed reaction is alpha-N-glycoloylneuraminosyl-(2-&gt;3)-beta-D-galactosyl-(1-&gt;4)-N-acetyl-beta-D-glucosaminyl-(1-&gt;3)-beta-D-galactosyl-(1-&gt;4)-N-acetyl-beta-D-glucosaminyl-(1-&gt;3)-beta-D-galactosyl-(1-&gt;4)-beta-D-glucosyl-(1&lt;-&gt;1')-ceramide + GDP-beta-L-fucose = alpha-N-glycoloylneuraminosyl-(2-&gt;3)-beta-D-galactosyl-(1-&gt;4)-N-acetyl-beta-D-glucosaminyl-(1-&gt;3)-beta-D-galactosyl-(1-&gt;4)-[alpha-L-fucosyl-(1-&gt;3)]-N-acetyl-beta-D-glucosaminyl-(1-&gt;3)-beta-D-galactosyl-(1-&gt;4)-beta-D-glucosyl-(1&lt;-&gt;1')-ceramide + GDP + H(+). The enzyme catalyses alpha-D-galactosyl-(1-&gt;3)-beta-D-galactosyl-(1-&gt;4)-N-acetyl-beta-D-glucosaminyl-(1-&gt;3)-beta-D-galactosyl-(1-&gt;4)-beta-D-glucosyl-(1&lt;-&gt;1')-ceramide + GDP-beta-L-fucose = a neolactoside IV(3)-alpha-Gal,III(3)-alpha-Fuc-nLc4Cer + GDP + H(+). It catalyses the reaction a neolactoside nLc4Cer + GDP-beta-L-fucose = a neolactoside III(3)-alpha-Fuc-nLc4Cer + GDP + H(+). It carries out the reaction an N-acetyl-alpha-neuraminyl-(2-&gt;3)-beta-D-galactosyl-(1-&gt;4)-N-acetyl-beta-D-glucosaminyl derivative + GDP-beta-L-fucose = an alpha-Neu5Ac-(2-&gt;3)-beta-D-Gal-(1-&gt;4)-[alpha-L-Fuc-(1-&gt;3)]-beta-D-GlcNAc derivative + GDP + H(+). The catalysed reaction is beta-D-Gal-(1-&gt;4)-beta-D-GlcNAc-(1-&gt;3)-beta-D-Gal-(1-&gt;4)-D-Glc + GDP-beta-L-fucose = beta-D-Gal-(1-&gt;4)-[alpha-L-Fuc-(1-&gt;3)]-beta-D-GlcNAc-(1-&gt;3)-beta-D-Gal-(1-&gt;4)-D-Glc + GDP + H(+). The enzyme catalyses an alpha-L-Fuc-(1-&gt;2)-beta-D-Gal-(1-&gt;4)-beta-D-GlcNAc derivative + GDP-beta-L-fucose = an alpha-L-Fuc-(1-&gt;2)-beta-D-Gal-(1-&gt;4)-[alpha-L-Fuc-(1-&gt;3)]-beta-D-GlcNAc derivative + GDP + H(+). Its pathway is protein modification; protein glycosylation. It participates in glycolipid biosynthesis. With respect to regulation, activated by Mn2+. Catalyzes alpha(1-&gt;3) linkage of fucosyl moiety transferred from GDP-beta-L-fucose to N-acetyl glucosamine (GlcNAc) within type 2 lactosamine (LacNAc, beta-D-Gal-(1-&gt;4)-beta-D-GlcNAc-) glycan attached to glycolipids and N- or O-linked glycoproteins. Fucosylates distal type 2 LacNAc and its fucosylated (H-type 2 LacNAc) and sialylated (sialyl-type 2 LacNAc) derivatives to form Lewis x (Lex) (CD15) and Lewis y (Ley) antigenic epitopes involved in cell adhesion and differentiation. Generates Lex epitopes in the brain, presumably playing a role in the maintenance of neuronal stemness and neurite outgrowth in progenitor neural cells. Fucosylates the internal type 2 LacNAc unit of the polylactosamine chain to form VIM-2 antigen that serves as recognition epitope for SELE. Can also modify milk oligosaccharides in particular type 2 tetrasaccharide LNnT. This Bos taurus (Bovine) protein is 4-galactosyl-N-acetylglucosaminide 3-alpha-L-fucosyltransferase 9.